Reading from the N-terminus, the 608-residue chain is MEADITNLRNKLKECEDERLKAAHYGLQLLERQTELQSQLDKCHEEMMITAEKYNQEKHALQREVELKSRMLDSLSCECEALKQQQKAQLEQLEVQLHRSHRQEVSDLKNKLENLKVELDEARLGEKQLKQKLDLQGELLAHKSEELRLLSEQRVLSSMSSELLALETELTAAEGVKNALKEEVNELQYKQEQLECLNTSLLHQVDRLKEEKEEREREAVSYYNALEKARVENQDLQVQLGHALQQAADPNSKGNSLFAEVEDRRVAMERQLNLMKDKYQSLKKQNAFTRDQMNKMKLQISTLLRMRGSQTEFEQQERLFAMIEQKNGEIKHLLGEINKLEKFKNLYESMESRPSTSDTACVLEDSTYYSDLLQLKLDKLNKENESTKDELSIQRMKALFESQRALDIERKLFTNERHLQLSESENMKLRAKLDELKLKYEPEERIEVPVLKRRREVLPLNITTPEETEETAAASATEDGVSRLPPHREEESCLNSLKDNTVQWKQPASSCVQPASLSPHKNLHLDTQPKKEKKCVKLVDSPANIEVLHEQSGNTPNSPRLTAESKLPTEVKERIETTSKLGKGACKKSHNIIYVSSKSAPETQCSQQ.

Residue Met1 is modified to N-acetylmethionine. The stretch at 1 to 445 forms a coiled coil; the sequence is MEADITNLRN…LKLKYEPEER (445 aa). Residues 465–487 form a disordered region; that stretch reads PEETEETAAASATEDGVSRLPPH. Residues Ser516, Ser518, and Ser558 each carry the phosphoserine modification.

This sequence belongs to the Spindly family. As to quaternary structure, interacts with KNTC1 and ZW10. These interactions appear weak and may be transient or indirect. Interacts with dynein intermediate chain and dynactin (DCTN1). Interacts with the catalytically active form of USP45. Monoubiquitinated with'Lys-48' linkage. Deubiquitinated by USP45.

Its subcellular location is the cytoplasm. It localises to the cytoskeleton. The protein resides in the microtubule organizing center. The protein localises to the centrosome. It is found in the chromosome. Its subcellular location is the centromere. It localises to the kinetochore. The protein resides in the nucleus. The protein localises to the spindle pole. Its function is as follows. Required for the localization of dynein and dynactin to the mitotic kintochore. Dynein is believed to control the initial lateral interaction between the kinetochore and spindle microtubules and to facilitate the subsequent formation of end-on kinetochore-microtubule attachments mediated by the NDC80 complex. Also required for correct spindle orientation. Does not appear to be required for the removal of spindle assembly checkpoint (SAC) proteins from the kinetochore upon bipolar spindle attachment. Acts as an adapter protein linking the dynein motor complex to various cargos and converts dynein from a non-processive to a highly processive motor in the presence of dynactin. Facilitates the interaction between dynein and dynactin and activates dynein processivity (the ability to move along a microtubule for a long distance without falling off the track). Plays a role in cell migration. The polypeptide is Protein Spindly (Spdl1) (Mus musculus (Mouse)).